The primary structure comprises 427 residues: Trigger factor (427 aa).

Positions 163–248 (GDTVVIDFVG…IHEVKTKEVP (86 aa)) constitute a PPIase FKBP-type domain.

Belongs to the FKBP-type PPIase family. Tig subfamily.

It localises to the cytoplasm. The enzyme catalyses [protein]-peptidylproline (omega=180) = [protein]-peptidylproline (omega=0). Its function is as follows. Involved in protein export. Acts as a chaperone by maintaining the newly synthesized protein in an open conformation. Functions as a peptidyl-prolyl cis-trans isomerase. The sequence is that of Trigger factor from Streptococcus pyogenes serotype M49 (strain NZ131).